A 340-amino-acid chain; its full sequence is S-adenosylmethionine:tRNA ribosyltransferase-isomerase (340 aa).

This sequence belongs to the QueA family. In terms of assembly, monomer.

The protein resides in the cytoplasm. The enzyme catalyses 7-aminomethyl-7-carbaguanosine(34) in tRNA + S-adenosyl-L-methionine = epoxyqueuosine(34) in tRNA + adenine + L-methionine + 2 H(+). It functions in the pathway tRNA modification; tRNA-queuosine biosynthesis. Its function is as follows. Transfers and isomerizes the ribose moiety from AdoMet to the 7-aminomethyl group of 7-deazaguanine (preQ1-tRNA) to give epoxyqueuosine (oQ-tRNA). The polypeptide is S-adenosylmethionine:tRNA ribosyltransferase-isomerase (Campylobacter concisus (strain 13826)).